Reading from the N-terminus, the 161-residue chain is Lipoprotein LpqH (161 aa).

A signal peptide spans 1-21 (MNRQLRFAVAGPEILAAVVSG). A compositionally biased stretch (low complexity) spans 21–46 (GCSSGNKSAPSSSASSSSTSPSASSG). Positions 21–49 (GCSSGNKSAPSSSASSSSTSPSASSGGAA) are disordered. Cys22 carries N-palmitoyl cysteine lipidation. Cys22 is lipidated: S-diacylglycerol cysteine.

It belongs to the mycobacterial 19 kDa antigen family. In terms of processing, modified by Lgt on Cys-22 with an S-linked diacylglycerol with a mixture of C16, C18 and C19 fatty acids, signal peptide is removed by LspA, modifed by Lnt with an amide-linked mixture of C16 and C19 fatty acids.

It is found in the cell membrane. In terms of biological role, might be involved in ligand transport. A host TLR2 agonist, modifies host gene expression in response to pathogen. The protein is Lipoprotein LpqH (lpqH) of Mycobacterium avium.